The primary structure comprises 214 residues: Octanoyltransferase (214 aa).

The BPL/LPL catalytic domain maps to 35–211 (KSNMNFIWLG…IIHEEFNFNF (177 aa)). Residues 75–82 (RGGEVTCH), 142–144 (SIG), and 155–157 (GFS) each bind substrate. The active-site Acyl-thioester intermediate is cysteine 173.

Belongs to the LipB family.

The protein localises to the cytoplasm. The enzyme catalyses octanoyl-[ACP] + L-lysyl-[protein] = N(6)-octanoyl-L-lysyl-[protein] + holo-[ACP] + H(+). It functions in the pathway protein modification; protein lipoylation via endogenous pathway; protein N(6)-(lipoyl)lysine from octanoyl-[acyl-carrier-protein]: step 1/2. In terms of biological role, catalyzes the transfer of endogenously produced octanoic acid from octanoyl-acyl-carrier-protein onto the lipoyl domains of lipoate-dependent enzymes. Lipoyl-ACP can also act as a substrate although octanoyl-ACP is likely to be the physiological substrate. The polypeptide is Octanoyltransferase (Prochlorococcus marinus subsp. pastoris (strain CCMP1986 / NIES-2087 / MED4)).